The chain runs to 238 residues: Survival of motor neuron-related-splicing factor 30 (238 aa).

Residues 72–132 (SWKVGDKCMA…KPVEEGRKAK (61 aa)) form the Tudor domain. Residues 142-160 (KKEMIAQQREYKKKKALKK) carry the Nuclear localization signal motif. At Ser-201 the chain carries Phosphoserine. An N6-acetyllysine modification is found at Lys-219.

The protein belongs to the SMN family. Associates with spliceosomes. Associates with U4/U5/U6 tri-snRNP and with U2 snRNP.

The protein resides in the nucleus speckle. It is found in the nucleus. The protein localises to the cajal body. Its function is as follows. Involved in spliceosome assembly. The protein is Survival of motor neuron-related-splicing factor 30 (Smndc1) of Mus musculus (Mouse).